The following is a 396-amino-acid chain: THAP domain-containing protein 5 (396 aa).

The THAP-type zinc-finger motif lies at 2–85; that stretch reads MPRYCAAICC…LKQTAVPTIF (84 aa). A disordered region spans residues 86 to 113; that stretch reads SLPEDNQGKDPSKKKSQKKNLEDEKEVC. The segment covering 91–113 has biased composition (basic and acidic residues); it reads NQGKDPSKKKSQKKNLEDEKEVC. Positions 322–325 match the HCFC1-binding motif (HBM) motif; it reads EHSY. Residues 349–382 adopt a coiled-coil conformation; that stretch reads LELKEQQTLGRLKSLEALVRQLKQENWLSEENVK.

As to quaternary structure, interacts with HTRA2; under apoptotic conditions. Interacts with ABRAXAS2. Post-translationally, cleaved by HTRA2 during apoptosis.

The protein resides in the nucleus. Functionally, has sequence-specific DNA-binding activity and can function as transcriptional repressor (in vitro). May be a regulator of cell cycle: THAP5 overexpression in human cell lines causes cell cycle arrest at G2/M phase. The chain is THAP domain-containing protein 5 (THAP5) from Macaca fascicularis (Crab-eating macaque).